The chain runs to 257 residues: Imidazole glycerol phosphate synthase subunit HisF (257 aa).

Catalysis depends on residues Asp-11 and Asp-130.

This sequence belongs to the HisA/HisF family. In terms of assembly, heterodimer of HisH and HisF.

The protein resides in the cytoplasm. It catalyses the reaction 5-[(5-phospho-1-deoxy-D-ribulos-1-ylimino)methylamino]-1-(5-phospho-beta-D-ribosyl)imidazole-4-carboxamide + L-glutamine = D-erythro-1-(imidazol-4-yl)glycerol 3-phosphate + 5-amino-1-(5-phospho-beta-D-ribosyl)imidazole-4-carboxamide + L-glutamate + H(+). It participates in amino-acid biosynthesis; L-histidine biosynthesis; L-histidine from 5-phospho-alpha-D-ribose 1-diphosphate: step 5/9. In terms of biological role, IGPS catalyzes the conversion of PRFAR and glutamine to IGP, AICAR and glutamate. The HisF subunit catalyzes the cyclization activity that produces IGP and AICAR from PRFAR using the ammonia provided by the HisH subunit. The protein is Imidazole glycerol phosphate synthase subunit HisF of Shewanella halifaxensis (strain HAW-EB4).